We begin with the raw amino-acid sequence, 341 residues long: 4-hydroxy-2-oxovalerate aldolase (341 aa).

The 253-residue stretch at 5–257 folds into the Pyruvate carboxyltransferase domain; that stretch reads ITLHDMTLRD…ETGVDVFRIA (253 aa). 13–14 is a substrate binding site; it reads RD. Residue Asp-14 coordinates Mn(2+). The active-site Proton acceptor is the His-17. Ser-167 and His-196 together coordinate substrate. Mn(2+) is bound by residues His-196 and His-198. Position 287 (Tyr-287) interacts with substrate.

It belongs to the 4-hydroxy-2-oxovalerate aldolase family.

The catalysed reaction is (S)-4-hydroxy-2-oxopentanoate = acetaldehyde + pyruvate. This is 4-hydroxy-2-oxovalerate aldolase (mhpE) from Cupriavidus taiwanensis (strain DSM 17343 / BCRC 17206 / CCUG 44338 / CIP 107171 / LMG 19424 / R1) (Ralstonia taiwanensis (strain LMG 19424)).